Reading from the N-terminus, the 388-residue chain is Protein DVU_0534 (388 aa).

The next 10 membrane-spanning stretches (helical) occupy residues L10–L31, L57–G78, A89–Y106, E130–V144, L166–I191, L199–I222, A254–I265, M291–V306, F316–N328, and I354–Y368.

Belongs to the NrfD family.

It localises to the cell membrane. HMWC (high-molecular-weight cytochrome c), ORF2, ORF3, ORF4, ORF5 and ORF6 in the HMC operon form a transmembrane protein complex that allows electron flow from the periplasmic hydrogenase to the cytoplasmic enzymes that catalyze reduction of sulfates. In Nitratidesulfovibrio vulgaris (strain ATCC 29579 / DSM 644 / CCUG 34227 / NCIMB 8303 / VKM B-1760 / Hildenborough) (Desulfovibrio vulgaris), this protein is Protein DVU_0534.